The primary structure comprises 223 residues: Ribonuclease S-2 (223 aa).

Positions 1–22 are cleaved as a signal peptide; sequence MAKSQLVSALFVFFFSLSPIYG. Cysteines 38 and 44 form a disulfide. N-linked (GlcNAc...) asparagine glycosylation is present at Asn-51. The Proton donor role is filled by His-55. RNA contacts are provided by residues His-55 and 94–95; that span reads QL. 3 disulfides stabilise this stretch: Cys-71–Cys-119, Cys-178–Cys-211, and Cys-194–Cys-205. Gln-112 is a catalytic residue. 115–116 provides a ligand contact to RNA; that stretch reads KH. His-116 acts as the Proton acceptor in catalysis.

Belongs to the RNase T2 family. Pistil.

It localises to the secreted. The protein localises to the extracellular space. It catalyses the reaction a ribonucleotidyl-ribonucleotide-RNA + H2O = a 3'-end 3'-phospho-ribonucleotide-RNA + a 5'-end dephospho-ribonucleoside-RNA + H(+). Self-incompatibility (SI) is the inherited ability of a flowering plant to prevent self-fertilization by discriminating between self and non-self pollen during pollination. In many species of the Solanaceae, self-incompatibility is controlled by the single, multiallelic locus S. This stylar glycoprotein is associated with expression of self-incompatibility in potato. This chain is Ribonuclease S-2, found in Solanum tuberosum (Potato).